The following is a 303-amino-acid chain: Sodium/potassium-transporting ATPase subunit beta-1 (303 aa).

Residues 1–34 lie on the Cytoplasmic side of the membrane; sequence MPAATKDSDGGWKKFLWNSEKKEFLGRTGGSWAK. Residues 35–55 form a helical; Signal-anchor for type II membrane protein membrane-spanning segment; sequence ILLFYVIFYGCLAGIFIGTIQ. The Extracellular portion of the chain corresponds to 56–303; sequence ALLLTINDFK…FDVKFTINES (248 aa). Asn113 carries an N-linked (GlcNAc...) asparagine glycan. Cystine bridges form between Cys126–Cys149 and Cys159–Cys175. Residues Asn194 and Asn264 are each glycosylated (N-linked (GlcNAc...) asparagine). Cys214 and Cys275 are oxidised to a cystine.

It belongs to the X(+)/potassium ATPases subunit beta family. As to quaternary structure, the sodium/potassium-transporting ATPase is composed of a catalytic alpha subunit, an auxiliary non-catalytic beta subunit and an additional regulatory subunit. In terms of tissue distribution, detected in all tissues except liver and cardiac muscle. Highest levels found in intestine, ovary and kidney with marginally lower levels in brain, spleen, esophagus, eye and pancreas, intermediate levels in gill and low levels in white and red skeletal muscle.

The protein resides in the cell membrane. Its function is as follows. This is the non-catalytic component of the active enzyme, which catalyzes the hydrolysis of ATP coupled with the exchange of Na(+) and K(+) ions across the plasma membrane. The beta subunit regulates, through assembly of alpha/beta heterodimers, the number of sodium pumps transported to the plasma membrane. The protein is Sodium/potassium-transporting ATPase subunit beta-1 (atp1b1) of Anguilla anguilla (European freshwater eel).